The following is a 249-amino-acid chain: NAD kinase (249 aa).

Asp-45 functions as the Proton acceptor in the catalytic mechanism. NAD(+)-binding positions include 45–46 (DG), Arg-50, 110–111 (NE), Asp-138, and 149–154 (SGWGMS).

The protein belongs to the NAD kinase family. It depends on a divalent metal cation as a cofactor.

The protein localises to the cytoplasm. The catalysed reaction is NAD(+) + ATP = ADP + NADP(+) + H(+). Involved in the regulation of the intracellular balance of NAD and NADP, and is a key enzyme in the biosynthesis of NADP. Catalyzes specifically the phosphorylation on 2'-hydroxyl of the adenosine moiety of NAD to yield NADP. This Saccharolobus solfataricus (strain ATCC 35092 / DSM 1617 / JCM 11322 / P2) (Sulfolobus solfataricus) protein is NAD kinase.